Here is a 574-residue protein sequence, read N- to C-terminus: Sulfate adenylyltransferase (574 aa).

Residues 1–169 (MANPPHGGVL…IEAINKLNHY (169 aa)) form an N-terminal region. Residues 170-394 (DYVALRYTPA…LRESSPPRHT (225 aa)) form a catalytic region. Gln-197 provides a ligand contact to sulfate. ATP contacts are provided by residues 197–200 (QTRN) and 291–294 (GRDH). Catalysis depends on residues Thr-198, Arg-199, and Asn-200. Arg-199 lines the sulfate pocket. Ala-295 contributes to the sulfate binding site. Position 333 (Val-333) interacts with ATP. The interval 395–574 (QGFTIFLTGY…LETEGFFDRS (180 aa)) is allosteric regulation domain; adenylyl-sulfate kinase-like. Residues 434 to 437 (DTVR), Arg-451, 477 to 478 (IA), and Arg-516 each bind 3'-phosphoadenylyl sulfate.

The protein in the N-terminal section; belongs to the sulfate adenylyltransferase family. In the C-terminal section; belongs to the APS kinase family. Homohexamer. Dimer of trimers.

Its subcellular location is the cytoplasm. It catalyses the reaction sulfate + ATP + H(+) = adenosine 5'-phosphosulfate + diphosphate. It participates in sulfur metabolism; hydrogen sulfide biosynthesis; sulfite from sulfate: step 1/3. Its activity is regulated as follows. Allosterically inhibited by 3'-phosphoadenosine 5'-phosphosulfate (PAPS). Functionally, catalyzes the first intracellular reaction of sulfate assimilation, forming adenosine-5'-phosphosulfate (APS) from inorganic sulfate and ATP. Plays an important role in sulfate activation as a component of the biosynthesis pathway of sulfur-containing amino acids. This Neosartorya fischeri (strain ATCC 1020 / DSM 3700 / CBS 544.65 / FGSC A1164 / JCM 1740 / NRRL 181 / WB 181) (Aspergillus fischerianus) protein is Sulfate adenylyltransferase.